We begin with the raw amino-acid sequence, 104 residues long: N(4)-acetylcytidine amidohydrolase (104 aa).

Positions 7 to 95 (MTFFERFETD…IQDIYPGISQ (89 aa)) constitute an ASCH domain. K22 (proton acceptor) is an active-site residue. The Nucleophile role is filled by T25. E75 (proton donor) is an active-site residue.

This sequence belongs to the N(4)-acetylcytidine amidohydrolase family.

The catalysed reaction is N(4)-acetylcytidine + H2O = cytidine + acetate + H(+). It catalyses the reaction N(4)-acetyl-2'-deoxycytidine + H2O = 2'-deoxycytidine + acetate + H(+). The enzyme catalyses N(4)-acetylcytosine + H2O = cytosine + acetate + H(+). Catalyzes the hydrolysis of N(4)-acetylcytidine (ac4C). The chain is N(4)-acetylcytidine amidohydrolase from Vibrio atlanticus (strain LGP32) (Vibrio splendidus (strain Mel32)).